We begin with the raw amino-acid sequence, 769 residues long: Probable protease Ga0334635_1659 (769 aa).

The tract at residues 118–167 (VARGSSDNNGAPPLSFTLSHGDPKSDPEPSSPSRLVNTGLSEAERPESPL) is disordered.

Functionally, probably a dedicated protease for substrate gasdermin bGSDM; cleaves the bGSDM precursor, releasing the pore-forming moiety, which integrates into the membrane and triggers cell death. Involved in defense against bacteriophages. Expression of gasdermin bGSDM and this neighboring protease is toxic in E.coli. The chain is Probable protease Ga0334635_1659 from Vitiosangium sp. (strain GDMCC 1.1324).